We begin with the raw amino-acid sequence, 395 residues long: RNA polymerase II elongation factor ELL3 (395 aa).

Disordered regions lie at residues leucine 129–methionine 177 and proline 189–glutamate 281. A Phosphoserine modification is found at serine 242. Residues glutamine 243 to glycine 260 show a composition bias toward acidic residues. The segment covering serine 269–proline 279 has biased composition (low complexity). In terms of domain architecture, OCEL spans proline 283–arginine 393.

This sequence belongs to the ELL/occludin family. In terms of assembly, component of the little elongation complex (LEC), at least composed of ELL (ELL, ELL2 or ELL3), ZC3H8, ICE1 and ICE2. Component of the super elongation complex (SEC), at least composed of EAF1, EAF2, CDK9, MLLT3/AF9, AFF (AFF1 or AFF4), the P-TEFb complex and ELL (ELL, ELL2 or ELL3). Interacts with AFF4. As to expression, actively expressed in embryonic stem cells (ES cells), while it is weakly expressed in differentiated cells.

Its subcellular location is the nucleus. Enhancer-binding elongation factor that specifically binds enhancers in embryonic stem cells (ES cells), marks them, and is required for their future activation during stem cell specification. Elongation factor component of the super elongation complex (SEC), a complex required to increase the catalytic rate of RNA polymerase II transcription by suppressing transient pausing by the polymerase at multiple sites along the DNA. Component of the little elongation complex (LEC), a complex required to regulate small nuclear RNA (snRNA) gene transcription by RNA polymerase II and III. Does not only bind to enhancer regions of active genes, but also marks the enhancers that are in a poised or inactive state in ES cells and is required for establishing proper RNA polymerase II occupancy at developmentally regulated genes in a cohesin-dependent manner. Probably required for priming developmentally regulated genes for later recruitment of the super elongation complex (SEC), for transcriptional activation during differentiation. Required for recruitment of P-TEFb within SEC during differentiation. Probably preloaded on germ cell chromatin, suggesting that it may prime gene activation by marking enhancers as early as in the germ cells. Promoting epithelial-mesenchymal transition (EMT). This chain is RNA polymerase II elongation factor ELL3 (Ell3), found in Mus musculus (Mouse).